A 548-amino-acid polypeptide reads, in one-letter code: (2S)-methylsuccinyl-CoA dehydrogenase (548 aa).

FAD contacts are provided by residues 282–291 and 315–317; these read AVFTEPNTGS and WIT. Ser-291 lines the substrate pocket. 409 to 412 is a binding site for substrate; the sequence is ESAR. Residues Arg-437 and 505–509 each bind FAD; that span reads QIHGG. Residue Glu-532 is the Proton acceptor of the active site. 534–536 serves as a coordination point for FAD; that stretch reads AAE.

Belongs to the acyl-CoA dehydrogenase family. As to quaternary structure, homodimer. FAD serves as cofactor.

It carries out the reaction (2S)-methylsuccinyl-CoA + oxidized [electron-transfer flavoprotein] + H(+) = 2-methylfumaryl-CoA + reduced [electron-transfer flavoprotein]. Functionally, involved in the ethylmalonyl-CoA pathway, a new acetyl-CoA assimilation strategy that operates in a number of bacteria and replaces the glyoxylate cycle. Catalyzes the oxidation of (2S)-methylsuccinyl-CoA to yield mesaconyl-(C1)-CoA. Highly specific for (S)-methylsuccinyl-CoA. This chain is (2S)-methylsuccinyl-CoA dehydrogenase, found in Cereibacter sphaeroides (Rhodobacter sphaeroides).